Consider the following 369-residue polypeptide: Protein V (369 aa).

Disordered regions lie at residues 1-23 (MDQD…GGRE) and 54-320 (INTL…GHRR). 4 stretches are compositionally biased toward basic and acidic residues: residues 7 to 20 (ISKE…EASG), 99 to 110 (AEAHARNVDKQN), 150 to 168 (GAED…RGED), and 175 to 193 (EEIR…RADN). 3 positions are modified to phosphoserine; by host: serine 249, serine 257, and serine 260. Zn(2+)-binding residues include histidine 318, cysteine 337, cysteine 341, cysteine 353, cysteine 355, cysteine 358, cysteine 362, and cysteine 365.

Belongs to the paramyxoviruses V protein family. Interacts with host IFIH1/MDA5 and DHX58/LGP2. Interacts with host IRF3. Interacts with host RIGI regulatory protein (via CARDs domain) and host TRIM25 (via SPRY domain); these interactions prevent TRIM25-mediated ubiquitination of RIG-I and disrupts downstream RIG-I signaling.

It localises to the host cytoplasm. Plays an essential role in the inhibition of host immune response. Prevents the establishment of cellular antiviral state by blocking interferon-alpha/beta (IFN-alpha/beta) production and signaling pathway. Interacts with host IFIH1/MDA5 and DHX58/LGP2 to inhibit the transduction pathway involved in the activation of IFN-beta promoter, thus protecting the virus against cell antiviral state. Also interacts with and inhibits host IRF3. Blocks the type I interferon signaling pathway by disrupting the RIG-I signaling pathway. This is Protein V (P/V/C) from Cavia cutleri (Guinea pig).